Reading from the N-terminus, the 276-residue chain is 2-dehydro-3-deoxyphosphooctonate aldolase (276 aa).

Belongs to the KdsA family.

The protein resides in the cytoplasm. The enzyme catalyses D-arabinose 5-phosphate + phosphoenolpyruvate + H2O = 3-deoxy-alpha-D-manno-2-octulosonate-8-phosphate + phosphate. It functions in the pathway carbohydrate biosynthesis; 3-deoxy-D-manno-octulosonate biosynthesis; 3-deoxy-D-manno-octulosonate from D-ribulose 5-phosphate: step 2/3. The protein operates within bacterial outer membrane biogenesis; lipopolysaccharide biosynthesis. This Helicobacter pylori (strain Shi470) protein is 2-dehydro-3-deoxyphosphooctonate aldolase.